Reading from the N-terminus, the 880-residue chain is MAERRPSGLERSPTAPPVLSNGHFASIGAEGDASSYEHGVQVIDENKEFNPDLSKYLSLENVTPAGFNYHLISVFGSQSTGKSTLLNHLFGTQFSVMSELERRQTTKGIWLSNNKKQGDAGSAERMADNILVMDVEGTDGRERGEDQDFERKSALFALATSEVLIVNIWEHQVGLYQGANMGLLKTVFEVNLQLFLKDKHTTHRSLLFFVIRDFIGTTPLKNLQKTLLEDLSRLWDTISKPAGLEKSTIHDYFDFQFYGLPHKGYQPDQFVTEANKLGLRFREGHRDPKRDALKGEFSEGGVFLPEYHRRIPADGFSHYAEGIWDQIVNNKDLDLPTQQELLAQFRCDEILREVMIGFDEAITAFEDKQAESVRVGAPEVLGGLGVAMRAARVKTLKSFETEASRYHKGVYQRKSAELQGKVDTRLKALFHGQLSAAHKSGIRDFSDSVSAAVKDGQKKGGSYDFAEIVAKETQSSLEKFEEVAHSTLVDGASWSNCTQELSLFKKELAEVSARLRRDEMRRLATRVERWVQSRLGESVGLEFNALGSGRAGGGAPENGEKPTEKDFWDRIWNLFEETVLDAERRFTDRASSFDASIDEVDVGLWRLRRKSWGVLRAKIEEEMIEGNLLLKLRENFEDKFRYDEAGVPRIWRPTDDIEGIYTRARESTLTVIPLLSRFRLERTTAPPPLDRWIGHTPSTATPADEEDLAPIGGVDEHEGKSLEEEMTILSDAKRQELTVRFKKAADGVYVEAKRSAIGGMTQVPLYFYGLLLALGWNEIWAVLRNPAYFILLFAFAIGAYITYQLNLWGPMLKMTEAASQQALEEGKRRLREFLESSDTGRQAIAMSAGERAGSSGRKEEYEMSDMQKRASNANDDLDDM.

The interval 1-22 (MAERRPSGLERSPTAPPVLSNG) is disordered. Residues 1-762 (MAERRPSGLE…KRSAIGGMTQ (762 aa)) are Cytoplasmic-facing. The region spanning 66–320 (GFNYHLISVF…IPADGFSHYA (255 aa)) is the GB1/RHD3-type G domain. GTP is bound at residue 76 to 83 (GSQSTGKS). The stretch at 496–519 (NCTQELSLFKKELAEVSARLRRDE) forms a coiled coil. Residues 763–783 (VPLYFYGLLLALGWNEIWAVL) form a helical membrane-spanning segment. At 784–786 (RNP) the chain is on the lumenal side. A helical membrane pass occupies residues 787-807 (AYFILLFAFAIGAYITYQLNL). At 808–880 (WGPMLKMTEA…SNANDDLDDM (73 aa)) the chain is on the cytoplasmic side. The interval 836-880 (SSDTGRQAIAMSAGERAGSSGRKEEYEMSDMQKRASNANDDLDDM) is disordered. A compositionally biased stretch (basic and acidic residues) spans 856–868 (GRKEEYEMSDMQK). Residues 856 to 880 (GRKEEYEMSDMQKRASNANDDLDDM) adopt a coiled-coil conformation.

The protein belongs to the TRAFAC class dynamin-like GTPase superfamily. GB1/RHD3 GTPase family. RHD3 subfamily.

The protein resides in the endoplasmic reticulum membrane. Cooperates with the reticulon proteins and tubule-shaping DP1 family proteins to generate and maintain the structure of the tubular endoplasmic reticulum network. Has GTPase activity, which is required for its function in ER organization. In Penicillium rubens (strain ATCC 28089 / DSM 1075 / NRRL 1951 / Wisconsin 54-1255) (Penicillium chrysogenum), this protein is Protein sey1 (sey1).